The chain runs to 148 residues: Transcriptional repressor NrdR (148 aa).

A zinc finger spans residues 3–34 (CPFCHNEDTQVLDTRVSDEGDTIRRRRRCAKC). Residues 49–139 (PAIVKKNGSR…VYRSFADIES (91 aa)) form the ATP-cone domain.

Belongs to the NrdR family. Zn(2+) is required as a cofactor.

Negatively regulates transcription of bacterial ribonucleotide reductase nrd genes and operons by binding to NrdR-boxes. This chain is Transcriptional repressor NrdR, found in Polynucleobacter necessarius subsp. necessarius (strain STIR1).